The chain runs to 250 residues: Ribosomal RNA small subunit methyltransferase J (250 aa).

S-adenosyl-L-methionine-binding positions include Arg-101–Asp-102, Glu-117–Arg-118, Ser-153–Ser-154, and Asp-171.

It belongs to the methyltransferase superfamily. RsmJ family.

It is found in the cytoplasm. It carries out the reaction guanosine(1516) in 16S rRNA + S-adenosyl-L-methionine = N(2)-methylguanosine(1516) in 16S rRNA + S-adenosyl-L-homocysteine + H(+). In terms of biological role, specifically methylates the guanosine in position 1516 of 16S rRNA. The protein is Ribosomal RNA small subunit methyltransferase J of Escherichia fergusonii (strain ATCC 35469 / DSM 13698 / CCUG 18766 / IAM 14443 / JCM 21226 / LMG 7866 / NBRC 102419 / NCTC 12128 / CDC 0568-73).